A 244-amino-acid polypeptide reads, in one-letter code: Centromere protein H (244 aa).

Position 1 is an N-acetylmethionine (methionine 1). Positions 1 to 33 (METQSEEQAVTKPADSGGEGGPPQVAGAQAARP) are disordered. Serine 16 carries the phosphoserine modification. The span at 22-31 (PPQVAGAQAA) shows a compositional bias: low complexity. Lysine 64 participates in a covalent cross-link: Glycyl lysine isopeptide (Lys-Gly) (interchain with G-Cter in SUMO2). At threonine 65 the chain carries Phosphothreonine. 2 coiled-coil regions span residues 66–104 (PEQI…DRMQ) and 146–189 (DLEE…MENS).

Belongs to the CENP-H/MCM16 family. In terms of assembly, self-associates. Component of the CENPA-NAC complex, at least composed of CENPA, CENPC, CENPH, CENPM, CENPN, CENPT and CENPU. The CENPA-NAC complex interacts with the CENPA-CAD complex, composed of CENPI, CENPK, CENPL, CENPO, CENPP, CENPQ, CENPR and CENPS. Interacts with KIF2C and NDC80.

Its subcellular location is the nucleus. It is found in the chromosome. The protein localises to the centromere. It localises to the kinetochore. Functionally, component of the CENPA-NAC (nucleosome-associated) complex, a complex that plays a central role in assembly of kinetochore proteins, mitotic progression and chromosome segregation. The CENPA-NAC complex recruits the CENPA-CAD (nucleosome distal) complex and may be involved in incorporation of newly synthesized CENPA into centromeres. In Bos taurus (Bovine), this protein is Centromere protein H (CENPH).